A 1326-amino-acid chain; its full sequence is Coiled-coil domain-containing protein 171 (1326 aa).

Coiled-coil stretches lie at residues 53–294, 323–391, 450–561, 597–630, 660–707, 765–792, 979–1143, and 1217–1241; these read TTKH…RAAH, AEAV…RLQY, SFSV…AFHK, SELCAVLQENVDALIADLNRANEKIRHLEYICKN, WHRQ…EQLV, FKLEIRTLAQALSTVEEKKQEEAKMKKK, FTQR…KECV, and IMTLEKEMTSHRSHIAALKSELHTA. The disordered stretch occupies residues 1306-1326; that stretch reads SSHSSPVTMSANANRPTQIGL.

This is Coiled-coil domain-containing protein 171 (CCDC171) from Homo sapiens (Human).